Reading from the N-terminus, the 675-residue chain is Protein PALS1 (675 aa).

2 disordered regions span residues 1–34 (MTTSHMNGHVTEESDSEVKNVDLASPEEHQKHRE) and 51–78 (RRSAQLERIRQQQEDMRRRREEEGKKQE). Residues 1–345 (MTTSHMNGHV…QQIKPPPAKE (345 aa)) are required for the correct localization of PALS1 and PATJ at cell-cell contacts and the normal formation of tight junctions and adherens junctions. 2 stretches are compositionally biased toward basic and acidic residues: residues 10 to 34 (VTEESDSEVKNVDLASPEEHQKHRE) and 54 to 78 (AQLERIRQQQEDMRRRREEEGKKQE). S14 and S25 each carry phosphoserine. The tract at residues 21 to 140 (VDLASPEEHQ…LKHIQHTLID (120 aa)) is interaction with PARD6B. A phosphoserine mark is found at S83 and S84. L27 domains are found at residues 120–177 (KILE…NKAS) and 179–235 (PFPL…MQLE). Positions 181 to 243 (PLISNAQDLA…LEPITDERVY (63 aa)) are interaction with LIN7C. Residues 256–336 (IVRIEKARDI…TLTFVLIPSQ (81 aa)) enclose the PDZ domain. The SH3 domain occupies 345-417 (ETVIHVKAHF…PGKSFQQQRE (73 aa)). The 182-residue stretch at 479–660 (KRPIILIGPQ…AYQELLRLIN (182 aa)) folds into the Guanylate kinase-like domain. 486–493 (GPQNCGQN) contributes to the ATP binding site.

The protein belongs to the MAGUK family. As to quaternary structure, heterodimer with MPP1. Forms a heterotrimeric complex composed of PALS1, LIN7B and PATJ; the N-terminal L27 domain of PALS1 interacts with the L27 domain of PATJ and the C-terminal L27 domain of PALS1 interacts with the L27 domain of LIN7B. Component of a complex composed of PALS1, CRB1 and MPP4. Component of a complex whose core is composed of ARHGAP17, AMOT, PALS1, PATJ and PARD3/PAR3. Component of a complex composed of PALS1, CRB1 and EPB41L5. Within the complex, interacts (via HOOK domain) with EPB41L5 (via FERM domain), and interacts with CRB1 (via intracellular domain). Component of a complex composed of PALS1, MPP3 and CRB1; PALS1 acts as a bridging protein between MPP3 (via guanylate kinase-like domain) and CRB1. Component of a complex composed of CRB3, PALS1 and PATJ. As part of the Crumbs complex; interacts with WWP1, the interaction is enhanced by AMOTL2 and facilitates WWP1 localization to the plasma membrane. The Crumbs complex promotes monoubiquitination of AMOTL2 by WWP1, which activates the Hippo signaling pathway. Interacts (via PDZ domain) with PATJ (via N-terminus). Interacts with EZR. Interacts (via PDZ domain) with CRB1 (via C-terminal ERLI motif). While the PDZ domain is sufficient for interaction with CRB1, the adjacent SH3 and guanylate kinase-like domains are likely to contribute to a high affinity interaction. Interacts with WWTR1/TAZ (via WW domain). Interacts with MPP7. Interacts (via PDZ domain) with CRB3 (via C-terminus). Interacts with LIN7C. Interacts with MPDZ. Interacts with PARD6B. Interacts with SC6A1. Interacts with CDH5; the interaction promotes PALS1 localization to cell junctions and is required for CDH5-mediated vascular lumen formation and endothelial cell. Interacts with NPHP1 (via coiled coil and SH3 domains). Interacts with NPHP4. Interacts with CRB2.

The protein resides in the golgi apparatus. It is found in the cell membrane. It localises to the endomembrane system. The protein localises to the cell junction. Its subcellular location is the tight junction. The protein resides in the adherens junction. It is found in the cell projection. It localises to the axon. The protein localises to the perikaryon. Its subcellular location is the apical cell membrane. Functionally, plays a role in tight junction biogenesis and in the establishment of cell polarity in epithelial cells. Also involved in adherens junction biogenesis by ensuring correct localization of the exocyst complex protein EXOC4/SEC8 which allows trafficking of adherens junction structural component CDH1 to the cell surface. Plays a role through its interaction with CDH5 in vascular lumen formation and endothelial membrane polarity. Required during embryonic and postnatal retinal development. Required for the maintenance of cerebellar progenitor cells in an undifferentiated proliferative state, preventing premature differentiation, and is required for cerebellar histogenesis, fissure formation, cerebellar layer organization and cortical development. Plays a role in neuronal progenitor cell survival, potentially via promotion of mTOR signaling. Plays a role in the radial and longitudinal extension of the myelin sheath in Schwann cells. May modulate SC6A1/GAT1-mediated GABA uptake by stabilizing the transporter. May play a role in the T-cell receptor-mediated activation of NF-kappa-B. Required for localization of EZR to the apical membrane of parietal cells and may play a role in the dynamic remodeling of the apical cytoskeleton. Required for the normal polarized localization of the vesicular marker STX4. Required for the correct trafficking of the myelin proteins PMP22 and MAG. Involved in promoting phosphorylation and cytoplasmic retention of transcriptional coactivators YAP1 and WWTR1/TAZ which leads to suppression of TGFB1-dependent transcription of target genes such as CCN2/CTGF, SERPINE1/PAI1, SNAI1/SNAIL1 and SMAD7. The protein is Protein PALS1 of Pongo abelii (Sumatran orangutan).